Here is a 609-residue protein sequence, read N- to C-terminus: DNA-directed RNA polymerase subunit beta' (609 aa).

Zn(2+)-binding residues include Cys-67, Cys-69, Cys-82, and Cys-85. Mg(2+) is bound by residues Asp-460, Asp-462, and Asp-464.

It belongs to the RNA polymerase beta' chain family. RpoC1 subfamily. In terms of assembly, in plastids the minimal PEP RNA polymerase catalytic core is composed of four subunits: alpha, beta, beta', and beta''. When a (nuclear-encoded) sigma factor is associated with the core the holoenzyme is formed, which can initiate transcription. Mg(2+) is required as a cofactor. The cofactor is Zn(2+).

The protein localises to the plastid. Its subcellular location is the chloroplast. It catalyses the reaction RNA(n) + a ribonucleoside 5'-triphosphate = RNA(n+1) + diphosphate. DNA-dependent RNA polymerase catalyzes the transcription of DNA into RNA using the four ribonucleoside triphosphates as substrates. The sequence is that of DNA-directed RNA polymerase subunit beta' from Emiliania huxleyi (Coccolithophore).